The primary structure comprises 288 residues: uncharacterized protein (288 aa).

The region spanning 5–81 is the HTH rpiR-type domain; sequence GNVLNKIGSL…LELSIELATK (77 aa). The segment at residues 41–60 is a DNA-binding region (H-T-H motif); that stretch reads LSEIAKHLQVGEATLVRFCR. The SIS domain occupies 129-269; that stretch reads VVKVLKKARR…YALLVQGEED (141 aa).

This is an uncharacterized protein from Haemophilus influenzae (strain ATCC 51907 / DSM 11121 / KW20 / Rd).